Here is a 676-residue protein sequence, read N- to C-terminus: Period circadian protein (676 aa).

The segment covering 1–34 (KVSDSAYSNSCSNSQSQRSGSSKSRLSGSHSSGS) has biased composition (low complexity). Residues 1 to 161 (KVSDSAYSNS…AAQSFPIPSP (161 aa)) are disordered. The Nuclear localization signal signature appears at 53-66 (KRNKDKSRKKKKNK). Residues 53–66 (KRNKDKSRKKKKNK) show a composition bias toward basic residues. A compositionally biased stretch (basic and acidic residues) spans 108-120 (ELQDQQHGEDHSE). PAS domains follow at residues 224–359 (DSFC…ATPI) and 377–483 (FAIR…RVFQ). Positions 583–676 (TNTSIAGTGG…VTLTESLLNK (94 aa)) are disordered. Tandem repeats lie at residues 589-590 (GT), 592-593 (GT), 594-595 (GT), 596-597 (GT), 598-599 (GT), 600-601 (GT), 602-603 (GT), 604-605 (GT), 606-607 (GT), 608-609 (GT), 610-611 (GT), 612-613 (GT), 614-615 (GT), 616-617 (GT), 618-619 (GT), 620-621 (GT), 622-623 (GT), 624-625 (GT), 626-627 (GT), 628-629 (GT), 630-631 (GT), 632-633 (GT), 634-635 (GT), 636-637 (GT), 638-639 (GT), and 640-641 (GT). Over residues 589–643 (GTGGTGTGTGTGTGTGTGTGTGTGTGTGTGTGTGTGTGTGTGTGTGTGTGTGTGN) the composition is skewed to gly residues. Residues 589 to 645 (GTGGTGTGTGTGTGTGTGTGTGTGTGTGTGTGTGTGTGTGTGTGTGTGTGTGTGNGT) form a 28 X 2 AA approximate tandem repeats of G-T region. The 27; approximate repeat unit spans residues 642 to 643 (GN). Repeat 28 spans residues 644 to 645 (GT). The span at 644 to 654 (GTNSCTGTGTT) shows a compositional bias: low complexity.

In terms of assembly, forms a heterodimer with timeless (TIM); the complex then translocates into the nucleus. Phosphorylated with a circadian rhythmicity, probably by the double-time protein (dbt). Phosphorylation could be implicated in the stability of per monomer and in the formation of heterodimer per-tim.

Its subcellular location is the nucleus. It is found in the cytoplasm. It localises to the perinuclear region. Its function is as follows. Essential for biological clock functions. Determines the period length of circadian and ultradian rhythms; an increase in PER dosage leads to shortened circadian rhythms and a decrease leads to lengthened circadian rhythms. Essential for the circadian rhythmicity of locomotor activity, eclosion behavior, and for the rhythmic component of the male courtship song that originates in the thoracic nervous system. The biological cycle depends on the rhythmic formation and nuclear localization of the TIM-PER complex. Light induces the degradation of TIM, which promotes elimination of PER. Nuclear activity of the heterodimer coordinatively regulates PER and TIM transcription through a negative feedback loop. Behaves as a negative element in circadian transcriptional loop. Does not appear to bind DNA, suggesting indirect transcriptional inhibition. This is Period circadian protein (per) from Drosophila mauritiana (Fruit fly).